A 562-amino-acid chain; its full sequence is uncharacterized protein (562 aa).

Transmembrane regions (helical) follow at residues 15–34 (WGGGVAHSVLILSLVIAFGI), 41–63 (VAGISLGVTWILFVGIVFGHFNL), 78–97 (LILFVYSIGLQVGPGFFSAF), 104–126 (LNMLAMIVVFAGVIITLALHFIT), and 165–187 (IALGYAVAYPLGVVGCIMSLLGL). RCK C-terminal domains follow at residues 204–286 (QGLG…ITAF) and 289–374 (KPIE…VLGN). A run of 6 helical transmembrane segments spans residues 384 to 403 (LIPIFLGIALGCILGSIPFM), 413 to 430 (LGLAGGPLIVSILISRFG), 450 to 472 (IGISLFLACVGLGAGDGFVETII), 476 to 498 (GYVWIAYGMIITIVPLLLAGFIG), 505 to 524 (NYYTLIGVLAGSTTNPPALA), and 539 to 561 (YATVYPLTMFLRVLTAQLLILSL).

Belongs to the AAE transporter (TC 2.A.81) family.

It localises to the cell membrane. This is an uncharacterized protein from Bacteroides fragilis (strain YCH46).